Consider the following 264-residue polypeptide: 3-methyl-2-oxobutanoate hydroxymethyltransferase (264 aa).

Mg(2+) is bound by residues Asp-45 and Asp-84. Residues 45–46 (DS), Asp-84, and Lys-113 each bind 3-methyl-2-oxobutanoate. Mg(2+) is bound at residue Glu-115. The active-site Proton acceptor is Glu-182.

The protein belongs to the PanB family. Homodecamer; pentamer of dimers. The cofactor is Mg(2+).

The protein resides in the cytoplasm. The enzyme catalyses 3-methyl-2-oxobutanoate + (6R)-5,10-methylene-5,6,7,8-tetrahydrofolate + H2O = 2-dehydropantoate + (6S)-5,6,7,8-tetrahydrofolate. The protein operates within cofactor biosynthesis; (R)-pantothenate biosynthesis; (R)-pantoate from 3-methyl-2-oxobutanoate: step 1/2. Catalyzes the reversible reaction in which hydroxymethyl group from 5,10-methylenetetrahydrofolate is transferred onto alpha-ketoisovalerate to form ketopantoate. The protein is 3-methyl-2-oxobutanoate hydroxymethyltransferase of Nitrosococcus oceani (strain ATCC 19707 / BCRC 17464 / JCM 30415 / NCIMB 11848 / C-107).